A 272-amino-acid chain; its full sequence is MFDLTGKHVCYVADCGGIALETSKVLMTKNIAKLAILQSTENPQAIAQLQSIKPSTQIFFWTYDVTMAREEMKKYFDEVMVQMDYIDVLINGATLCDENNIDATINTNLTGMMNTVATVLPYMDRQMGGSGGLIVNVTSVIGLDPSPVFCAYSASKFGVIGFTRSLADPLYYSQNGVAVMAVCCGPTRVFVDRELKAFLEYGQSFADRLRRAPCQSTSVCGQNIVNAIERSENGQIWIADKGGLELVKLHWYWHMADQFLHYMQSNDEEDQE.

11–34 (YVADCGGIALETSKVLMTKNIAKL) is an NAD(+) binding site. Position 139 (Ser139) interacts with substrate. Tyr152 (proton acceptor) is an active-site residue.

This sequence belongs to the short-chain dehydrogenases/reductases (SDR) family.

In Drosophila teissieri (Fruit fly), this protein is Alcohol dehydrogenase-related 31 kDa protein (Adhr).